Consider the following 127-residue polypeptide: Large ribosomal subunit protein uL18 (127 aa).

The tract at residues 1–26 (MASTLTVRKSLSDRAKARARRQARGR) is disordered. The segment covering 17 to 26 (ARARRQARGR) has biased composition (basic residues).

The protein belongs to the universal ribosomal protein uL18 family. Part of the 50S ribosomal subunit; part of the 5S rRNA/L5/L18/L25 subcomplex. Contacts the 5S and 23S rRNAs.

Functionally, this is one of the proteins that bind and probably mediate the attachment of the 5S RNA into the large ribosomal subunit, where it forms part of the central protuberance. The polypeptide is Large ribosomal subunit protein uL18 (Cutibacterium acnes (strain DSM 16379 / KPA171202) (Propionibacterium acnes)).